The sequence spans 387 residues: 17-beta-hydroxysteroid dehydrogenase type 2 (387 aa).

A helical; Signal-anchor for type II membrane protein transmembrane segment spans residues F4–F24. Q82–A111 contributes to the NAD(+) binding site. S219 is a substrate binding site. Y232 is a catalytic residue.

This sequence belongs to the short-chain dehydrogenases/reductases (SDR) family. Homodimer. As to expression, expressed in placenta.

It is found in the endoplasmic reticulum membrane. The catalysed reaction is 17beta-estradiol + NAD(+) = estrone + NADH + H(+). The enzyme catalyses testosterone + NAD(+) = androst-4-ene-3,17-dione + NADH + H(+). It carries out the reaction 17beta-hydroxy-5alpha-androstan-3-one + NAD(+) = 5alpha-androstan-3,17-dione + NADH + H(+). It catalyses the reaction (20S)-hydroxypregn-4-en-3-one + NAD(+) = progesterone + NADH + H(+). In terms of biological role, catalyzes the NAD-dependent oxidation of the highly active 17beta-hydroxysteroids, such as estradiol (E2), testosterone (T), and dihydrotestosterone (DHT), to their less active forms and thus regulates the biological potency of these steroids. Oxidizes estradiol to estrone, testosterone to androstenedione, and dihydrotestosterone to 5alpha-androstan-3,17-dione. Also has 20-alpha-HSD activity. The protein is 17-beta-hydroxysteroid dehydrogenase type 2 of Homo sapiens (Human).